Here is a 366-residue protein sequence, read N- to C-terminus: 3-dehydroquinate synthase (366 aa).

Residues 71–76, 105–109, 129–130, lysine 142, lysine 151, and 169–172 contribute to the NAD(+) site; these read DGEQYK, GVIGD, TT, and CLQT. The Zn(2+) site is built by glutamate 184, histidine 248, and histidine 265.

Belongs to the sugar phosphate cyclases superfamily. Dehydroquinate synthase family. It depends on NAD(+) as a cofactor. Requires Co(2+) as cofactor. Zn(2+) is required as a cofactor.

It localises to the cytoplasm. It carries out the reaction 7-phospho-2-dehydro-3-deoxy-D-arabino-heptonate = 3-dehydroquinate + phosphate. It functions in the pathway metabolic intermediate biosynthesis; chorismate biosynthesis; chorismate from D-erythrose 4-phosphate and phosphoenolpyruvate: step 2/7. Catalyzes the conversion of 3-deoxy-D-arabino-heptulosonate 7-phosphate (DAHP) to dehydroquinate (DHQ). This Photorhabdus laumondii subsp. laumondii (strain DSM 15139 / CIP 105565 / TT01) (Photorhabdus luminescens subsp. laumondii) protein is 3-dehydroquinate synthase.